Consider the following 369-residue polypeptide: Glutamate 5-kinase (369 aa).

ATP is bound at residue K10. The substrate site is built by S50, D137, and N149. ATP is bound by residues 169–170 and 210–216; these read TD and TGGMVTK. The region spanning 276-349 is the PUA domain; it reads EGSIFIDEGA…GKHSEEMLAT (74 aa).

The protein belongs to the glutamate 5-kinase family.

Its subcellular location is the cytoplasm. It carries out the reaction L-glutamate + ATP = L-glutamyl 5-phosphate + ADP. It participates in amino-acid biosynthesis; L-proline biosynthesis; L-glutamate 5-semialdehyde from L-glutamate: step 1/2. Its function is as follows. Catalyzes the transfer of a phosphate group to glutamate to form L-glutamate 5-phosphate. The sequence is that of Glutamate 5-kinase from Desulfitobacterium hafniense (strain Y51).